We begin with the raw amino-acid sequence, 310 residues long: MTQDVRRSKLEFNKLQKRLRRNVGKAIADYNMIEDGDKVMVCLSGGKDSYAMLDILMGLQKAAPIKFDIVAVNMDQKQPGFPEHILPEYLDSLGIEYHIVERDTYSVVKSVIPEGKTTCGLCSRLRRGTLYGFAERIGATKIALGHHRDDIVETLFLNMFYGGRLKAMPPKLLADDKRNIIIRPLAYCVEADLEEFAKQKAFPIIPCNLCGSQENLQRQAIKQMLQGWEKQFPGRIETIFSSLQRVSASQLADTELYDFVGLTIDRSAEPKDYGEQSAINVFPPLDDSFAGNSLKGEQDPVKLIEAVNLG.

Positions 44-49 (SGGKDS) match the PP-loop motif motif. [4Fe-4S] cluster contacts are provided by Cys119, Cys122, and Cys210.

This sequence belongs to the TtcA family. Homodimer. The cofactor is Mg(2+). Requires [4Fe-4S] cluster as cofactor.

Its subcellular location is the cytoplasm. It catalyses the reaction cytidine(32) in tRNA + S-sulfanyl-L-cysteinyl-[cysteine desulfurase] + AH2 + ATP = 2-thiocytidine(32) in tRNA + L-cysteinyl-[cysteine desulfurase] + A + AMP + diphosphate + H(+). Its pathway is tRNA modification. Functionally, catalyzes the ATP-dependent 2-thiolation of cytidine in position 32 of tRNA, to form 2-thiocytidine (s(2)C32). The sulfur atoms are provided by the cysteine/cysteine desulfurase (IscS) system. This is tRNA-cytidine(32) 2-sulfurtransferase from Saccharophagus degradans (strain 2-40 / ATCC 43961 / DSM 17024).